The chain runs to 443 residues: ATP-dependent protease ATPase subunit HslU (443 aa).

ATP contacts are provided by residues Ile18, 60–65 (GVGKTE), Asp256, Glu321, and Arg393.

This sequence belongs to the ClpX chaperone family. HslU subfamily. A double ring-shaped homohexamer of HslV is capped on each side by a ring-shaped HslU homohexamer. The assembly of the HslU/HslV complex is dependent on binding of ATP.

The protein localises to the cytoplasm. ATPase subunit of a proteasome-like degradation complex; this subunit has chaperone activity. The binding of ATP and its subsequent hydrolysis by HslU are essential for unfolding of protein substrates subsequently hydrolyzed by HslV. HslU recognizes the N-terminal part of its protein substrates and unfolds these before they are guided to HslV for hydrolysis. The sequence is that of ATP-dependent protease ATPase subunit HslU from Edwardsiella ictaluri (strain 93-146).